A 307-amino-acid polypeptide reads, in one-letter code: MAKHVAVLMGGLSAEREVSLCSGAACAEALRGEGFEVTEVDVDRQIGERLAALRPDVAFNALHGRFGEDGIIQGVLEMLAIPYTHSGVLASALAMRKDRARDVLAAAGVPIAKGVTVDRLEAAQRHILPPPYVIKPLGEGSSFGVFIVREDQAYPPQELTRSDWAFGNRVLVESYIGGRELTCAVIGEKAHDVIEIKAVGGGWYDYDAKYRKGGSIHILPAELKRNIYQNVQLLSLKAHKALGCRGVSRTDFRYDDRPEGTGELIVLEVNTQPGMTETSLLPEIAAYAGLSFGELVRWMVDDASCDR.

One can recognise an ATP-grasp domain in the interval 101–301 (RDVLAAAGVP…FGELVRWMVD (201 aa)). Residue 128–182 (LPPPYVIKPLGEGSSFGVFIVREDQAYPPQELTRSDWAFGNRVLVESYIGGRELT) coordinates ATP. Residues D251, E268, and N270 each contribute to the Mg(2+) site.

The protein belongs to the D-alanine--D-alanine ligase family. The cofactor is Mg(2+). It depends on Mn(2+) as a cofactor.

The protein resides in the cytoplasm. It carries out the reaction 2 D-alanine + ATP = D-alanyl-D-alanine + ADP + phosphate + H(+). Its pathway is cell wall biogenesis; peptidoglycan biosynthesis. In terms of biological role, cell wall formation. This chain is D-alanine--D-alanine ligase, found in Beijerinckia indica subsp. indica (strain ATCC 9039 / DSM 1715 / NCIMB 8712).